The chain runs to 1580 residues: Collagen alpha-1(XVI) chain (1580 aa).

A signal peptide spans 1–21; that stretch reads MLTSWAPGLWVLGLWATFSHG. N-linked (GlcNAc...) asparagine glycosylation occurs at N47. Positions 50-231 constitute a Laminin G-like domain; sequence GFNLIRRLNL…LQQAHIYCDP (182 aa). The tract at residues 232–374 is nonhelical region 10 (NC10); that stretch reads ELVLEEGCCE…SPDAPLQCVE (143 aa). The tract at residues 324–547 is disordered; that stretch reads RESNVTLGPS…DPAPAWEGLG (224 aa). The N-linked (GlcNAc...) asparagine glycan is linked to N327. The Collagen-like 1 domain occupies 375 to 424; sequence GPKGEKGESGDLGPPGLPGPTGQKGQKGEKGDGGLKGLPGKPGRDGRPGE. The triple-helical region 9 (COL9) with 3 imperfections stretch occupies residues 375–509; the sequence is GPKGEKGESG…PGTKGEKGDP (135 aa). A compositionally biased stretch (pro residues) spans 449–460; that stretch reads PGPPGLPGPPGI. Over residues 486-495 the composition is skewed to gly residues; it reads GKEGPGGKPG. Positions 510–524 are nonhelical region 9 (NC9); the sequence is CEVCPTLPEGSQNFV. Residues 525–570 form a triple-helical region 8 (COL8) with 1 imperfection region; sequence GLPGKPGPKGEPGDPAPAWEGLGTVGLKGDRGDPGIQGMKGEKGEP. Positions 555-557 match the Cell attachment site motif; the sequence is RGD. A nonhelical region 8 (NC8) region spans residues 571 to 586; that stretch reads CSSCSSGVGAQHLGPS. Positions 585–598 are enriched in low complexity; the sequence is PSPGHGLPGLPGTS. Residues 585-935 are disordered; that stretch reads PSPGHGLPGL…LPGQPGLTAE (351 aa). A triple-helical region 7 (COL7) with 1 imperfection region spans residues 587–640; that stretch reads PGHGLPGLPGTSGIPGPRGLKGEKGSFGDTGPAGVPGSPGPVGPAGIKGAKGEP. 2 Collagen-like domains span residues 590–643 and 676–725; these read GLPG…PCEP and GLPG…PAGP. Residues 641–661 form a nonhelical region 7 (NC7) region; it reads CEPCTALSELQDGDMRVVHLP. The interval 662 to 732 is triple-helical region 6 (COL6) with 1 imperfection; sequence GPAGEKGEPG…AGPKGEKGDG (71 aa). The segment covering 683-693 has biased composition (basic and acidic residues); sequence KAGERGLKGQK. Positions 698 to 714 are enriched in low complexity; the sequence is NPGDPGTPGITGQPGIS. The interval 733–747 is nonhelical region 6 (NC6); the sequence is CTACPSLQGALTDVS. The segment at 748–870 is triple-helical region 5 (COL5) with 3 imperfections; the sequence is GLPGKPGPKG…RGEKGEPGEC (123 aa). The 52-residue stretch at 797-848 folds into the Collagen-like 4 domain; it reads GAEGPQGEPGTQGLPGTQGLPGPRGPPGSAGEKGAQGSPGPKGAIGPMGPPG. Residues 801–817 are compositionally biased toward low complexity; the sequence is PQGEPGTQGLPGTQGLP. The tract at residues 871-881 is nonhelical region 5 (NC5); it reads SCPSRGEPIFS. Positions 882-933 are triple-helical region 4 (COL4) with 2 imperfections; the sequence is GMPGAPGLWMGSSSQPGPQGPPGVPGPPGPPGMPGLQGVPGHNGLPGQPGLT. The segment covering 899–914 has biased composition (pro residues); that stretch reads PQGPPGVPGPPGPPGM. The segment at 934–967 is nonhelical region 4 (NC4); that stretch reads AELGSLPIEKHLLKSICGDCAQGQTAHPAFLLEK. The segment at 968-982 is triple-helical region 3 (COL3); the sequence is GEKGDQGIPGVPGFD. Residues 983-1005 form a nonhelical region 3 (NC3) region; that stretch reads NCARCFIERERPRAEEARGDNSE. Disordered regions lie at residues 995-1405 and 1445-1523; these read RAEE…LPGS and AAAP…GYGK. Positions 1000–1002 match the Cell attachment site motif; the sequence is RGD. The region spanning 1006-1063 is the Collagen-like 5 domain; sequence GEPGCSGSPGLPGPPGMPGQRGEEGPPGMRGSPGPPGPIGLQGERGLTGLTGDKGEPG. The segment at 1006–1409 is triple-helical region 2 (COL2) with 2 imperfections; that stretch reads GEPGCSGSPG…PGLPGSMGDM (404 aa). Low complexity predominate over residues 1098–1107; the sequence is SGPPGSEGLP. Pro residues-rich tracts occupy residues 1139 to 1148 and 1178 to 1187; these read FPGPPGPPGF and SPGPPGPPGI. The segment covering 1196–1205 has biased composition (basic and acidic residues); it reads LDGKDGKPGL. The Cell attachment site signature appears at 1206–1208; it reads RGD. The Collagen-like 6 domain maps to 1210 to 1263; that stretch reads GPAGPPGLMGPPGFKGKTGHPGLPGPKGDCGKPGPPGSSGRPGAEGEPGAMGPQ. Low complexity predominate over residues 1247–1263; the sequence is SSGRPGAEGEPGAMGPQ. Residues 1265–1281 are compositionally biased toward pro residues; that stretch reads RPGPPGHLGPPGQPGPP. Collagen-like domains are found at residues 1350–1407, 1448–1500, and 1504–1552; these read GQKG…GSMG, PGRP…GDIG, and AGEN…GKAG. Residues 1362–1371 show a composition bias toward gly residues; that stretch reads GMPGGPGKSG. Positions 1396-1405 are enriched in low complexity; sequence NPGLPGLPGS. Residues 1410–1448 are nonhelical region 2 (NC2); sequence VNYDDIKRFIRQEIIKLFDERMAYYTSRMQFPMEVAAAP. A triple-helical region 1 (COL1) with 2 imperfections region spans residues 1449–1554; that stretch reads GRPGPPGKDG…MGQPGKAGHC (106 aa). A nonhelical region 1 (NC1) region spans residues 1555–1580; sequence NPSDCFGAMPMEQQYPPMKSMKGPFG.

It belongs to the fibril-associated collagens with interrupted helices (FACIT) family. As to quaternary structure, homotrimer. Interacts with FBN1, fibronectin and integrins ITGA1/ITGB1 and ITGA2/ITGB1. Integrin ITGA1/ITGB1 binds to a unique site within COL16A1 located close to its C-terminal end between collagenous domains COL1-COL3. Prolines at the third position of the tripeptide repeating unit (G-X-Y) are hydroxylated in some or all of the chains. In terms of processing, glycosylated. In terms of tissue distribution, expressed in most tissues examined with highest levels of expression observed in heart. Strongly expressed in cortical and medullar regions of kidney and more weakly expressed in lung. Also detected in the ciliary muscle of the eye, on the serosa layer lining the muscularis externa of intestinal tissue, and in the perimysium membrane lining both the cardiac muscle bundle and the smooth muscle tissue of the small intestine. Strongly stained in particulate or granular structures. Not detected in brain or skeletal muscle.

The protein localises to the secreted. It is found in the extracellular space. It localises to the extracellular matrix. In terms of biological role, involved in mediating cell attachment and inducing integrin-mediated cellular reactions, such as cell spreading and alterations in cell morphology. This Mus musculus (Mouse) protein is Collagen alpha-1(XVI) chain.